The primary structure comprises 209 residues: 2-phospho-L-lactate guanylyltransferase (209 aa).

Belongs to the CofC family. Homodimer.

The catalysed reaction is (2S)-2-phospholactate + GTP + H(+) = (2S)-lactyl-2-diphospho-5'-guanosine + diphosphate. The protein operates within cofactor biosynthesis; coenzyme F420 biosynthesis. Functionally, guanylyltransferase that catalyzes the activation of (2S)-2-phospholactate (2-PL) as (2S)-lactyl-2-diphospho-5'-guanosine, via the condensation of 2-PL with GTP. It is involved in the biosynthesis of coenzyme F420, a hydride carrier cofactor. This is 2-phospho-L-lactate guanylyltransferase from Methanosphaerula palustris (strain ATCC BAA-1556 / DSM 19958 / E1-9c).